We begin with the raw amino-acid sequence, 107 residues long: Flagellar transcriptional regulator FlhD (107 aa).

The protein belongs to the FlhD family. Homodimer; disulfide-linked. Forms a heterohexamer composed of two FlhC and four FlhD subunits. Each FlhC binds a FlhD dimer, forming a heterotrimer, and a hexamer assembles by dimerization of two heterotrimers.

Its subcellular location is the cytoplasm. In terms of biological role, functions in complex with FlhC as a master transcriptional regulator that regulates transcription of several flagellar and non-flagellar operons by binding to their promoter region. Activates expression of class 2 flagellar genes, including fliA, which is a flagellum-specific sigma factor that turns on the class 3 genes. Also regulates genes whose products function in a variety of physiological pathways. The protein is Flagellar transcriptional regulator FlhD of Bordetella bronchiseptica (strain ATCC BAA-588 / NCTC 13252 / RB50) (Alcaligenes bronchisepticus).